The following is a 657-amino-acid chain: MLSSTFVRSKAGLVPVILAALILAACTGDAPQTPPPVNIQDEASANSDYYLQQLQQSSDDNKADWQLLAIRALLREAKVPQAAEQLSTLPANLSDTQRQEQQLLAAELLIAQKNTPAAADILAKLEATQLSANQKVRYYQAQIAANQDKATLPLIRAFIAQEPLLTDKAHQDNIDGTWQSLSQLTPQELNTMVINADENVLQGWLDLLRVYQDNKQDPELLKAGIKDWQTRYPQNPAAKNLPTALTQISNFSQASTAKIALLLPLSGPAQVFADAIQQGFTAAQNGSAVTASVPVTPNVTESSPTDTAAVVSDDTPATLPAPVTPPVVTNAQVKIYDTNTQPLAALLAQAQQDGATLVVGPLLKPEVEQLSATPSTLNILALNQPEASNNSPNICYFALSPEDEARDAAHHLWEQQKRMPLLLVPRGALGERIAKAFADEWQKQGGQTVLQQNFGSTTELKQSINSGAGIRLTGTPVSVSNVAAAPASVTIAGLTIPAPPIDAPVVSTSSSGNIDAVYIIATPSELTLIKPMIDMATSSRSKPALFASSRSYQAGAGPDYRLEMEGIQFSDIPLMAGSNPALLQQASAKYANDYSLVRLYAMGIDAWALANHFSEMRQIPGFQVKGVTGDLTASSDCVITRKLPWLQYRQGMVVPLA.

The N-terminal stretch at Met1 to Ala25 is a signal peptide. Cys26 carries N-palmitoyl cysteine lipidation. The S-diacylglycerol cysteine moiety is linked to residue Cys26.

Belongs to the LpoA family. Interacts with PBP1a.

It is found in the cell outer membrane. In terms of biological role, regulator of peptidoglycan synthesis that is essential for the function of penicillin-binding protein 1A (PBP1a). The polypeptide is Penicillin-binding protein activator LpoA (Yersinia pseudotuberculosis serotype O:1b (strain IP 31758)).